The chain runs to 346 residues: Biotin synthase (346 aa).

One can recognise a Radical SAM core domain in the interval 38 to 256; it reads KQIQVSTLLS…IAVARIMMPT (219 aa). [4Fe-4S] cluster is bound by residues cysteine 53, cysteine 57, and cysteine 60. Positions 97, 128, 188, and 260 each coordinate [2Fe-2S] cluster.

This sequence belongs to the radical SAM superfamily. Biotin synthase family. Homodimer. The cofactor is [4Fe-4S] cluster. [2Fe-2S] cluster serves as cofactor.

It carries out the reaction (4R,5S)-dethiobiotin + (sulfur carrier)-SH + 2 reduced [2Fe-2S]-[ferredoxin] + 2 S-adenosyl-L-methionine = (sulfur carrier)-H + biotin + 2 5'-deoxyadenosine + 2 L-methionine + 2 oxidized [2Fe-2S]-[ferredoxin]. It participates in cofactor biosynthesis; biotin biosynthesis; biotin from 7,8-diaminononanoate: step 2/2. In terms of biological role, catalyzes the conversion of dethiobiotin (DTB) to biotin by the insertion of a sulfur atom into dethiobiotin via a radical-based mechanism. The polypeptide is Biotin synthase (Salmonella arizonae (strain ATCC BAA-731 / CDC346-86 / RSK2980)).